Consider the following 206-residue polypeptide: Protein-methionine-sulfoxide reductase heme-binding subunit MsrQ (206 aa).

A run of 6 helical transmembrane segments spans residues 14–34, 45–65, 82–102, 118–138, 149–169, and 179–199; these read IKPLLFVAGLLPFARWFWLGA, FLTRSSGTWTLVCLLVTLAIT, MCGLFAFFYGSLHFLAWVWWD, PFITVGFAAFVLMAALAATST, WQTLHRAVYAIGLLAILHFWW, and QPLLYGSVLALLLGWRVAAWW.

This sequence belongs to the MsrQ family. In terms of assembly, heterodimer of a catalytic subunit (MsrP) and a heme-binding subunit (MsrQ). Requires FMN as cofactor. Heme b is required as a cofactor.

The protein localises to the cell inner membrane. Part of the MsrPQ system that repairs oxidized periplasmic proteins containing methionine sulfoxide residues (Met-O), using respiratory chain electrons. Thus protects these proteins from oxidative-stress damage caused by reactive species of oxygen and chlorine generated by the host defense mechanisms. MsrPQ is essential for the maintenance of envelope integrity under bleach stress, rescuing a wide series of structurally unrelated periplasmic proteins from methionine oxidation. MsrQ provides electrons for reduction to the reductase catalytic subunit MsrP, using the quinone pool of the respiratory chain. This is Protein-methionine-sulfoxide reductase heme-binding subunit MsrQ from Bordetella pertussis (strain Tohama I / ATCC BAA-589 / NCTC 13251).